Consider the following 1064-residue polypeptide: MPPAMADNLDIWAVDSQIASDGAISVDFLLPTGIYIQLEVPREATISYIKQMLWKQVHNYPMFNLLMDIDSYMFACVNQTAVYEELEDETRRLCDVRPFLPVLKLVTRSCDPAEKLDSKIGVLIGKGLHEFDALKDPEVNEFRRKMRKFSEAKIQSLVGLSWIDWLKHTYPPEHEPSVLENLEDKLYGGKLVVAVHFENSQDVFSFQVSPNLNPIKINELAIQKRLTIRGKEDEASPCDYVLQVSGRVEYVFGDHPLIQFQYIRNCVMNRTLPHFILVECCKIKKMYEQEMIAIEAAINRNSSNLPLPLPPKKTRVISHIWDNNNPFQITLVKGNKLNTEETVKVHVRAGLFHGTELLCKTVVSSEISGKNDHIWNEQLEFDINICDLPRMARLCFAVYAVLDKVKTKKSTKTINPSKYQTIRKAGKVHYPVAWVNTMVFDFKGQLRSGDVILHSWSSFPDELEEMLNPMGTVQTNPYAENATALHITFPENKKQPCYYPPFDKIIEKAAELASGDSANVSSRGGKKFLAVLKEILDRDPLSQLCENEMDLIWTLRQDCRENFPQSLPKLLLSIKWNKLEDVAQLQALLQIWPKLPPREALELLDFNYPDQYVREYAVGCLRQMSDEELSQYLLQLVQVLKYEPFLDCALSRFLLERALDNRRIGQFLFWHLRSEVHTPAVSVQFGVILEAYCRGSVGHMKVLSKQVEALNKLKTLNSLIKLNAVKLSRAKGKEAMHTCLKQSAYREALSDLQSPLNPCVILSELYVEKCKYMDSKMKPLWLVYSSRAFGEDSVGVIFKNGDDLRQDMLTLQMLRLMDLLWKEAGLDLRMLPYGCLATGDRSGLIEVVSTSETIADIQLNSSNVAATAAFNKDALLNWLKEYNSGDDLDRAIEEFTLSCAGYCVASYVLGIGDRHSDNIMVKKTGQLFHIDFGHILGNFKSKFGIKRERVPFILTYDFIHVIQQGKTGNTEKFGRFRQCCEDAYLILRRHGNLFITLFALMLTAGLPELTSVKDIQYLKDSLALGKSEEEALKQFKQKFDEALRESWTTKVNWMAHTVRKDYRS.

The region spanning 20-109 (SDGAISVDFL…LPVLKLVTRS (90 aa)) is the PI3K-ABD domain. One can recognise a PI3K-RBD domain in the interval 188–279 (GGKLVVAVHF…RTLPHFILVE (92 aa)). A Phosphoserine modification is found at S318. The C2 PI3K-type domain occupies 323 to 490 (NNNPFQITLV…NATALHITFP (168 aa)). The short motif at 404-412 (KVKTKKSTK) is the Nuclear localization signal (NLS) element. One can recognise a PIK helical domain in the interval 518–695 (ANVSSRGGKK…GVILEAYCRG (178 aa)). The PI3K/PI4K catalytic domain maps to 766–1047 (YVEKCKYMDS…KFDEALRESW (282 aa)). A G-loop region spans residues 772–778 (YMDSKMK). The interval 910–918 (GIGDRHSDN) is catalytic loop. The tract at residues 929–955 (HIDFGHILGNFKSKFGIKRERVPFILT) is activation loop. S1064 bears the Phosphoserine; by autocatalysis mark.

The protein belongs to the PI3/PI4-kinase family. Heterodimer of a catalytic subunit PIK3CB and a p85 regulatory subunit (PIK3R1, PIK3R2 or PIK3R3). Interaction with PIK3R2 is required for nuclear localization and nuclear export. Part of a complex with PIK3R1 and PTEN. Binding to PTEN may antagonize the lipid kinase activity under normal growth conditions. Part of a complex involved in autophagosome formation composed of PIK3C3 and PIK3R4. Interacts with BECN1, ATG14 and RAB5A. Post-translationally, phosphorylation at Ser-1064 down-regulates lipid kinase activity. Autophosphorylation at Ser-1064 negatively regulates the phosphatidylinositol-4,5-bisphosphate 3-kinase activity.

It is found in the cytoplasm. The protein resides in the nucleus. The catalysed reaction is a 1,2-diacyl-sn-glycero-3-phospho-(1D-myo-inositol-4,5-bisphosphate) + ATP = a 1,2-diacyl-sn-glycero-3-phospho-(1D-myo-inositol-3,4,5-trisphosphate) + ADP + H(+). The enzyme catalyses 1-octadecanoyl-2-(5Z,8Z,11Z,14Z)-eicosatetraenoyl-sn-glycero-3-phospho-1D-myo-inositol 4,5-bisphosphate + ATP = 1-octadecanoyl-2-(5Z,8Z,11Z,14Z-eicosatetraenoyl)-sn-glycero-3-phospho-(1D-myo-inositol 3,4,5-triphosphate) + ADP + H(+). It carries out the reaction L-seryl-[protein] + ATP = O-phospho-L-seryl-[protein] + ADP + H(+). The protein operates within phospholipid metabolism; phosphatidylinositol phosphate biosynthesis. Functionally, phosphoinositide-3-kinase (PI3K) phosphorylates phosphatidylinositol (PI) derivatives at position 3 of the inositol ring to produce 3-phosphoinositides. Uses ATP and PtdIns(4,5)P2 (phosphatidylinositol 4,5-bisphosphate) to generate phosphatidylinositol 3,4,5-trisphosphate (PIP3). PIP3 plays a key role by recruiting PH domain-containing proteins to the membrane, including AKT1 and PDPK1, activating signaling cascades involved in cell growth, survival, proliferation, motility and morphology. Involved in the activation of AKT1 upon stimulation by G-protein coupled receptors (GPCRs) ligands such as CXCL12, sphingosine 1-phosphate, and lysophosphatidic acid. May also act downstream receptor tyrosine kinases. Required in different signaling pathways for stable platelet adhesion and aggregation. Plays a role in platelet activation signaling triggered by GPCRs, alpha-IIb/beta-3 integrins (ITGA2B/ ITGB3) and ITAM (immunoreceptor tyrosine-based activation motif)-bearing receptors such as GP6. Regulates the strength of adhesion of ITGA2B/ ITGB3 activated receptors necessary for the cellular transmission of contractile forces. Required for platelet aggregation induced by F2 (thrombin) and thromboxane A2 (TXA2). Has a role in cell survival. May have a role in cell migration. Involved in the early stage of autophagosome formation. Modulates the intracellular level of PtdIns3P (phosphatidylinositol 3-phosphate) and activates PIK3C3 kinase activity. May act as a scaffold, independently of its lipid kinase activity to positively regulate autophagy. May have a role in insulin signaling as scaffolding protein in which the lipid kinase activity is not required. May have a kinase-independent function in regulating cell proliferation and in clathrin-mediated endocytosis. Mediator of oncogenic signal in cell lines lacking PTEN. The lipid kinase activity is necessary for its role in oncogenic transformation. Required for the growth of ERBB2 and RAS driven tumors. Also has a protein kinase activity showing autophosphorylation. The protein is Phosphatidylinositol 4,5-bisphosphate 3-kinase catalytic subunit beta isoform (Pik3cb) of Mus musculus (Mouse).